Reading from the N-terminus, the 612-residue chain is UPF0329 protein ECU05_1680/ECU11_0050 (612 aa).

Positions 304 to 330 (RQRREMEKKEEEKKKEEEKKKEEEKRK) are enriched in basic and acidic residues. The segment at 304-424 (RQRREMEKKE…RKRYKIHRRV (121 aa)) is disordered. The span at 331 to 349 (EEKKKKKEEKKEEKKKKKE) shows a compositional bias: basic residues. Over residues 350–388 (EKKEEKKEEKKEEKKEEKKEEKKEEKKEEKSGKSLREGE) the composition is skewed to basic and acidic residues.

It belongs to the UPF0329 family.

This chain is UPF0329 protein ECU05_1680/ECU11_0050, found in Encephalitozoon cuniculi (strain GB-M1) (Microsporidian parasite).